Reading from the N-terminus, the 268-residue chain is Shikimate dehydrogenase (NADP(+)) (268 aa).

Shikimate is bound by residues 13–15 (SLS) and Thr-60. The Proton acceptor role is filled by Lys-64. Asp-76 serves as a coordination point for NADP(+). Asn-85 and Asp-100 together coordinate shikimate. Residues 124-128 (GAGGA), 148-153 (NRTMSR), and Ile-209 each bind NADP(+). Tyr-211 is a shikimate binding site. Gly-232 contacts NADP(+).

The protein belongs to the shikimate dehydrogenase family. As to quaternary structure, homodimer.

It carries out the reaction shikimate + NADP(+) = 3-dehydroshikimate + NADPH + H(+). The protein operates within metabolic intermediate biosynthesis; chorismate biosynthesis; chorismate from D-erythrose 4-phosphate and phosphoenolpyruvate: step 4/7. Its function is as follows. Involved in the biosynthesis of the chorismate, which leads to the biosynthesis of aromatic amino acids. Catalyzes the reversible NADPH linked reduction of 3-dehydroshikimate (DHSA) to yield shikimate (SA). This is Shikimate dehydrogenase (NADP(+)) from Staphylococcus haemolyticus (strain JCSC1435).